A 452-amino-acid chain; its full sequence is Exodeoxyribonuclease 7 large subunit (452 aa).

The protein belongs to the XseA family. As to quaternary structure, heterooligomer composed of large and small subunits.

The protein resides in the cytoplasm. The enzyme catalyses Exonucleolytic cleavage in either 5'- to 3'- or 3'- to 5'-direction to yield nucleoside 5'-phosphates.. Functionally, bidirectionally degrades single-stranded DNA into large acid-insoluble oligonucleotides, which are then degraded further into small acid-soluble oligonucleotides. The chain is Exodeoxyribonuclease 7 large subunit from Bacillus thuringiensis (strain Al Hakam).